The following is a 278-amino-acid chain: Aquaporin NIP3-3 (278 aa).

The next 2 membrane-spanning stretches (helical) occupy residues 70 to 90 (VSAE…TIIM) and 99 to 119 (TLLG…LSLI). The short motif at 127–129 (NPA) is the NPA 1 element. 3 helical membrane-spanning segments follow: residues 141 to 163 (PSAH…SFAV), 185 to 205 (AFFV…ALAT), and 213 to 233 (LIAV…GPST). Positions 238-240 (NPA) match the NPA 2 motif. Residues 255–275 (IWVYLVATPLGAIAGTGAYVA) form a helical membrane-spanning segment.

The protein belongs to the MIP/aquaporin (TC 1.A.8) family. NIP (TC 1.A.8.12) subfamily. Expressed in leaves and at lower levels in roots and anthers.

Its subcellular location is the membrane. Aquaporins facilitate the transport of water and small neutral solutes across cell membranes. The polypeptide is Aquaporin NIP3-3 (NIP3-3) (Oryza sativa subsp. japonica (Rice)).